The sequence spans 138 residues: Putative nickel-responsive regulator (138 aa).

Ni(2+) contacts are provided by H78, H89, H91, and C97.

It belongs to the transcriptional regulatory CopG/NikR family. The cofactor is Ni(2+).

Transcriptional regulator. The protein is Putative nickel-responsive regulator of Pyrococcus furiosus (strain ATCC 43587 / DSM 3638 / JCM 8422 / Vc1).